A 317-amino-acid polypeptide reads, in one-letter code: Acetyl-coenzyme A carboxylase carboxyl transferase subunit alpha (317 aa).

The CoA carboxyltransferase C-terminal domain occupies 41-291 (KVDKLLRSTY…SMALDSALRD (251 aa)).

Belongs to the AccA family. In terms of assembly, acetyl-CoA carboxylase is a heterohexamer composed of biotin carboxyl carrier protein (AccB), biotin carboxylase (AccC) and two subunits each of ACCase subunit alpha (AccA) and ACCase subunit beta (AccD).

It is found in the cytoplasm. The enzyme catalyses N(6)-carboxybiotinyl-L-lysyl-[protein] + acetyl-CoA = N(6)-biotinyl-L-lysyl-[protein] + malonyl-CoA. It functions in the pathway lipid metabolism; malonyl-CoA biosynthesis; malonyl-CoA from acetyl-CoA: step 1/1. In terms of biological role, component of the acetyl coenzyme A carboxylase (ACC) complex. First, biotin carboxylase catalyzes the carboxylation of biotin on its carrier protein (BCCP) and then the CO(2) group is transferred by the carboxyltransferase to acetyl-CoA to form malonyl-CoA. The sequence is that of Acetyl-coenzyme A carboxylase carboxyl transferase subunit alpha from Paramagnetospirillum magneticum (strain ATCC 700264 / AMB-1) (Magnetospirillum magneticum).